The chain runs to 490 residues: Glutamate--tRNA ligase (490 aa).

A 'HIGH' region motif is present at residues 10 to 20 (PSPTGSLHIGG). A 'KMSKS' region motif is present at residues 251-255 (KLSKR). Lys-254 contributes to the ATP binding site.

It belongs to the class-I aminoacyl-tRNA synthetase family. Glutamate--tRNA ligase type 1 subfamily. In terms of assembly, monomer.

The protein localises to the cytoplasm. It carries out the reaction tRNA(Glu) + L-glutamate + ATP = L-glutamyl-tRNA(Glu) + AMP + diphosphate. Functionally, catalyzes the attachment of glutamate to tRNA(Glu) in a two-step reaction: glutamate is first activated by ATP to form Glu-AMP and then transferred to the acceptor end of tRNA(Glu). This chain is Glutamate--tRNA ligase, found in Moorella thermoacetica (strain ATCC 39073 / JCM 9320).